The primary structure comprises 734 residues: Mechanosensitive ion channel protein 10 (734 aa).

Disordered regions lie at residues 1–75 and 115–136; these read MAEQ…LTQR and SFSR…APVT. Positions 24-39 are enriched in basic and acidic residues; that stretch reads EASRRSKEMASPESEK. Position 34 is a phosphoserine (S34). 2 stretches are compositionally biased toward polar residues: residues 65 to 75 and 117 to 129; these read PNQNNVGLTQR and SRAS…NRSV. Phosphoserine is present on residues S128 and S131. The next 6 helical transmembrane spans lie at 164 to 184, 196 to 216, 249 to 269, 288 to 308, 516 to 536, and 551 to 571; these read ISTL…ALVA, FWGL…SGML, SVQV…LFNH, LISI…LKIL, LVTA…LEVA, and LAFI…FVFV.

It belongs to the MscS (TC 1.A.23) family. In terms of tissue distribution, detected in the root tip and throughout the vasculature of the root and leaf.

It localises to the cell membrane. Mechanosensitive channel that opens in response to stretch forces in the membrane lipid bilayer. This chain is Mechanosensitive ion channel protein 10 (MSL10), found in Arabidopsis thaliana (Mouse-ear cress).